A 334-amino-acid polypeptide reads, in one-letter code: Glycerol-3-phosphate dehydrogenase [NAD(P)+] (334 aa).

5 residues coordinate NADPH: Ser10, Trp11, His31, Arg32, and Lys105. The sn-glycerol 3-phosphate site is built by Lys105, Gly136, and Ser138. Position 140 (Ala140) interacts with NADPH. Sn-glycerol 3-phosphate contacts are provided by Lys191, Asp244, Ser254, Arg255, and Asn256. The active-site Proton acceptor is the Lys191. Position 255 (Arg255) interacts with NADPH. Positions 279 and 281 each coordinate NADPH.

The protein belongs to the NAD-dependent glycerol-3-phosphate dehydrogenase family.

Its subcellular location is the cytoplasm. It carries out the reaction sn-glycerol 3-phosphate + NAD(+) = dihydroxyacetone phosphate + NADH + H(+). The catalysed reaction is sn-glycerol 3-phosphate + NADP(+) = dihydroxyacetone phosphate + NADPH + H(+). It functions in the pathway membrane lipid metabolism; glycerophospholipid metabolism. Catalyzes the reduction of the glycolytic intermediate dihydroxyacetone phosphate (DHAP) to sn-glycerol 3-phosphate (G3P), the key precursor for phospholipid synthesis. This is Glycerol-3-phosphate dehydrogenase [NAD(P)+] from Chlorobium phaeobacteroides (strain BS1).